The chain runs to 175 residues: Large ribosomal subunit protein mL67 (175 aa).

It belongs to the mitochondrion-specific ribosomal protein mL67 family. In terms of assembly, component of the mitochondrial large ribosomal subunit (mt-LSU). Mature yeast 74S mitochondrial ribosomes consist of a small (37S) and a large (54S) subunit. The 37S small subunit contains a 15S ribosomal RNA (15S mt-rRNA) and at least 32 different proteins. The 54S large subunit contains a 21S rRNA (21S mt-rRNA) and at least 45 different proteins.

Its subcellular location is the mitochondrion. Component of the mitochondrial ribosome (mitoribosome), a dedicated translation machinery responsible for the synthesis of mitochondrial genome-encoded proteins, including at least some of the essential transmembrane subunits of the mitochondrial respiratory chain. The mitoribosomes are attached to the mitochondrial inner membrane and translation products are cotranslationally integrated into the membrane. mL67/mhr1 also has extraribosomal functions, being involved in regulation of mitochondrial DNA recombination, maintenance and repair, and generation of homoplasmic cells. mL67/mhr1 also acts as transcription factor involved in regulation of RNA polymerase II-dependent transcription. This is Large ribosomal subunit protein mL67 (mhr1) from Schizosaccharomyces pombe (strain 972 / ATCC 24843) (Fission yeast).